A 353-amino-acid chain; its full sequence is 3-dehydroquinate synthase (353 aa).

It belongs to the archaeal-type DHQ synthase family.

It carries out the reaction 2-amino-2,3,7-trideoxy-D-lyxo-hept-6-ulosonate + NAD(+) + H2O = 3-dehydroquinate + NH4(+) + NADH + H(+). Functionally, catalyzes the oxidative deamination and cyclization of 2-amino-3,7-dideoxy-D-threo-hept-6-ulosonic acid (ADH) to yield 3-dehydroquinate (DHQ), which is fed into the canonical shikimic pathway of aromatic amino acid biosynthesis. This chain is 3-dehydroquinate synthase, found in Nitrosopumilus maritimus (strain SCM1).